The chain runs to 915 residues: p53-induced death domain-containing protein 1 (915 aa).

Ala-2 is modified (N-acetylalanine). LRR repeat units follow at residues 131–152, 154–176, 177–199, 200–221, 223–245, 246–268, and 269–290; these read CLAH…VPEL, GLDA…GALP, ALTF…GSLS, TLQR…IGNL, SLSE…AGLR, SLRL…VHLP, and LITR…LLDA. Ser-304 carries the post-translational modification Phosphoserine. ZU5 domains lie at 327-459 and 460-601; these read DLDS…VLRP and VSNT…WYTT. 2 peptidase S68 regions span residues 428-457 and 571-599; these read DLET…LVVL and DITT…WLWY. Catalysis depends on residues His-449, Ser-451, His-591, and Ser-593. The segment at 585-721 is UPA domain; it reads ARFQVTHFSW…TTALDREAQD (137 aa). Residues 793-878 form the Death domain; that stretch reads TQSNLLSVAS…DVAEEVRAIL (86 aa). The interval 888–915 is disordered; sequence SIRRTGLAPEDSTLPGTSASQTPESAQA. A compositionally biased stretch (polar residues) spans 901–915; it reads LPGTSASQTPESAQA.

As to quaternary structure, forms a complex named the PIDDosome with CASP2 and CRADD. Forms a complex with IKBKG and RIPK1. Interacts with FADD and MADD. Post-translationally, undergoes autoproteolytic processing whose extent either directs cells towards survival or apoptotic pathways. Autoproteolytically cleaved into two main fragments PIDD-N and PIDD-C. PIDD-C can be further processed into PIDD-CC, a processing which is enhanced by DNA damage. The cleavage producing PIDD-C is required for translocation of PIDD1 to the nucleus upon DNA damage and activation of NF-kappa-B. PIDD-CC mediates the interaction with CRADD and the cleavage producing PIDD-CC is required for the activation of CASP2. PIDD-N remains associated with PIDD-C and PIDD-CC after cleavage. In terms of tissue distribution, ubiquitous.

It is found in the cytoplasm. The protein resides in the nucleus. Functionally, component of the DNA damage/stress response pathway that functions downstream of p53/TP53 and can either promote cell survival or apoptosis. Associated with CRADD and the CASP2 caspase, it forms the PIDDosome a complex that activates CASP2 and triggers apoptosis. Associated with IKBKG and RIPK1, it enhances sumoylation and ubiquitination of IKBKG which is important for activation of the transcription factor NF-kappa-B. The sequence is that of p53-induced death domain-containing protein 1 from Mus musculus (Mouse).